The primary structure comprises 511 residues: Probable G-protein coupled receptor 101 (511 aa).

At 1-35 the chain is on the extracellular side; the sequence is MPPSCTNSTQENNGSRVCLPLSKMPISVAHGIIRS. Asparagine 7 and asparagine 13 each carry an N-linked (GlcNAc...) asparagine glycan. The helical transmembrane segment at 36–56 threads the bilayer; that stretch reads VVLLVILGVAFLGNVVLGYVL. The Cytoplasmic portion of the chain corresponds to 57–67; the sequence is HRKPNLLQVTN. Residues 68–90 traverse the membrane as a helical segment; sequence RFIFNLLVTDLLQVALVAPWVVS. Residues 91 to 106 lie on the Extracellular side of the membrane; sequence TAIPFFWPLNIHFCTA. Cysteines 104 and 182 form a disulfide. The chain crosses the membrane as a helical span at residues 107 to 127; the sequence is LVSLTHLFAFASVNTIVVVSV. At 128-149 the chain is on the cytoplasmic side; sequence DRYLTIIHPLSYPSKMTNRRSY. A helical transmembrane segment spans residues 150–170; sequence ILLYGTWIAAFLQSTPPLYGW. Over 171–196 the chain is Extracellular; it reads GHATFDDRNAFCSMIWGASPAYTVVS. The helical transmembrane segment at 197–217 threads the bilayer; sequence VVSFLVIPLGVMIACYSVVFG. The Cytoplasmic segment spans residues 218–398; the sequence is AARRQQALLY…PPCYECKAAR (181 aa). A compositionally biased stretch (basic and acidic residues) spans 240-261; the sequence is DSVVHENEEGAKKRDEFQDKNE. Disordered regions lie at residues 240-315 and 367-386; these read DSVV…EVSN and EAMRIPESSPPSRRNSTSDP. The span at 376–385 shows a compositional bias: polar residues; sequence PPSRRNSTSD. Residues 399-419 traverse the membrane as a helical segment; sequence VIFVIISTYVLSLGPYCFLAV. At 420–432 the chain is on the extracellular side; the sequence is LAVWVDIDTRVPQ. The helical transmembrane segment at 433 to 453 threads the bilayer; it reads WVITIIIWLFFLQCCIHPYVY. At 454 to 511 the chain is on the cytoplasmic side; that stretch reads GYMHKSIKKEIQEVLKKLICKKSPPVEDSHPDLHETEAGTEGGIEGKAVPSHDSATSP. Residues 476–511 are disordered; sequence SPPVEDSHPDLHETEAGTEGGIEGKAVPSHDSATSP. Over residues 477–490 the composition is skewed to basic and acidic residues; it reads PPVEDSHPDLHETE.

It belongs to the G-protein coupled receptor 1 family. Expressed in the brain in hypothalamus.

The protein resides in the cell membrane. Orphan receptor. In Mus musculus (Mouse), this protein is Probable G-protein coupled receptor 101 (Gpr101).